Consider the following 288-residue polypeptide: Pyridoxal kinase PdxY (288 aa).

Substrate-binding positions include serine 12 and 47–48; that span reads TQ. ATP contacts are provided by residues aspartate 114, glutamate 151, lysine 184, and 211-214; that span reads RPLL. Aspartate 225 is a substrate binding site.

The protein belongs to the pyridoxine kinase family. PdxY subfamily. Homodimer. The cofactor is Mg(2+).

The catalysed reaction is pyridoxal + ATP = pyridoxal 5'-phosphate + ADP + H(+). Its pathway is cofactor metabolism; pyridoxal 5'-phosphate salvage; pyridoxal 5'-phosphate from pyridoxal: step 1/1. In terms of biological role, pyridoxal kinase involved in the salvage pathway of pyridoxal 5'-phosphate (PLP). Catalyzes the phosphorylation of pyridoxal to PLP. The chain is Pyridoxal kinase PdxY from Pseudomonas aeruginosa (strain UCBPP-PA14).